A 493-amino-acid chain; its full sequence is Ecdysteroid UDP-glucosyltransferase (493 aa).

Residues Met1–Thr17 form the signal peptide.

It belongs to the UDP-glycosyltransferase family.

Functionally, catalyzes the transfer of glucose from UDP-glucose to ecdysteroids which are insect molting hormones. Expression of egt interferes with normal insect development and block molting. This chain is Ecdysteroid UDP-glucosyltransferase (egt), found in Choristoneura fumiferana defective polyhedrosis virus (Cfdef).